The sequence spans 206 residues: Glycerol-3-phosphate acyltransferase (206 aa).

The next 6 helical transmembrane spans lie at Ile-6 to Phe-26, Lys-57 to Ala-77, Phe-86 to Trp-106, Val-118 to Leu-138, Ile-143 to Leu-163, and Glu-165 to Trp-185.

It belongs to the PlsY family. In terms of assembly, probably interacts with PlsX.

Its subcellular location is the cell inner membrane. The catalysed reaction is an acyl phosphate + sn-glycerol 3-phosphate = a 1-acyl-sn-glycero-3-phosphate + phosphate. The protein operates within lipid metabolism; phospholipid metabolism. Catalyzes the transfer of an acyl group from acyl-phosphate (acyl-PO(4)) to glycerol-3-phosphate (G3P) to form lysophosphatidic acid (LPA). This enzyme utilizes acyl-phosphate as fatty acyl donor, but not acyl-CoA or acyl-ACP. The protein is Glycerol-3-phosphate acyltransferase of Prochlorococcus marinus (strain MIT 9211).